Reading from the N-terminus, the 1534-residue chain is Activating signal cointegrator 1 complex subunit 3 (1534 aa).

Positions 83–267 (ETAYNTNENL…FLHVNPFIGL (185 aa)) constitute a Helicase ATP-binding 1 domain. An ATP-binding site is contributed by 96–103 (APTGAGKT). The short motif at 209–212 (DEVH) is the DEVH box element. Positions 294–500 (QLHDMEEVCY…SLADNLNAEI (207 aa)) constitute a Helicase C-terminal 1 domain. Residues 576–849 (STDLGRTASH…GSEAVCIINF (274 aa)) enclose the SEC63 1 domain. Residues 898-1073 (HTLYHTDTNV…WLGIGQVGLF (176 aa)) form the Helicase ATP-binding 2 domain. Residue 911–918 (APTGSGKT) coordinates ATP. A DEIH box motif is present at residues 1015 to 1018 (DEIH). Residues 1106–1313 (PVFQAIRTHS…GTVTSKQDAM (208 aa)) enclose the Helicase C-terminal 2 domain. The 108-residue stretch at 1374-1481 (PLTYGRISSY…TLPHIQKQEL (108 aa)) folds into the SEC63 2 domain.

Belongs to the helicase family.

It localises to the nucleus. Its subcellular location is the nucleus speckle. The protein resides in the cytoplasm. It is found in the cytosol. It carries out the reaction Couples ATP hydrolysis with the unwinding of duplex DNA by translocating in the 3'-5' direction.. It catalyses the reaction ATP + H2O = ADP + phosphate + H(+). Its function is as follows. 3'-5' DNA helicase involved in repair of alkylated DNA. Promotes DNA unwinding to generate single-stranded substrate needed for alkbh3, enabling alkbh3 to process alkylated N3-methylcytosine (3mC) within double-stranded regions. Also involved in activation of the ribosome quality control (RQC) pathway, a pathway that degrades nascent peptide chains during problematic translation. Drives the splitting of stalled ribosomes. The protein is Activating signal cointegrator 1 complex subunit 3 (ascc3) of Danio rerio (Zebrafish).